We begin with the raw amino-acid sequence, 124 residues long: Large ribosomal subunit protein bL12 (124 aa).

It belongs to the bacterial ribosomal protein bL12 family. In terms of assembly, homodimer. Part of the ribosomal stalk of the 50S ribosomal subunit. Forms a multimeric L10(L12)X complex, where L10 forms an elongated spine to which 2 to 4 L12 dimers bind in a sequential fashion. Binds GTP-bound translation factors.

Its function is as follows. Forms part of the ribosomal stalk which helps the ribosome interact with GTP-bound translation factors. Is thus essential for accurate translation. In Burkholderia mallei (strain NCTC 10247), this protein is Large ribosomal subunit protein bL12.